Consider the following 984-residue polypeptide: Mast/stem cell growth factor receptor Kit (984 aa).

The first 21 residues, 1–21 (MEYHWILLCVSLCFTFHPGDT), serve as a signal peptide directing secretion. Topologically, residues 22 to 514 (KPTITPAGTY…RTISHDLFSP (493 aa)) are extracellular. 5 consecutive Ig-like C2-type domains span residues 23-97 (PTIT…ERAS), 98-197 (IYIY…LTVR), 203-300 (PPVI…VWLD), 311-395 (PVNN…ASVN), and 398-498 (FTIF…QAFT). Intrachain disulfides connect Cys44-Cys87, Cys129-Cys178, Cys144-Cys175, and Cys226-Cys284. N-linked (GlcNAc...) asparagine glycosylation is found at Asn227, Asn260, Asn314, Asn351, Asn395, Asn448, and Asn476. Cys421 and Cys487 are oxidised to a cystine. The helical transmembrane segment at 515–535 (LLIGSVSAACILCLILIVLFY) threads the bilayer. At 536–984 (KYMQKPKYQI…GTEPFRVQRV (449 aa)) the chain is on the cytoplasmic side. Mg(2+) is bound at residue Tyr558. Tyr558 and Tyr560 each carry phosphotyrosine; by autocatalysis. Residues 579-926 (LRFGKTLGSG…LSDTTKHIYL (348 aa)) form the Protein kinase domain. ATP-binding positions include 586–593 (GSGAFGKV), Lys613, and 661–667 (EYCCFGD). A phosphotyrosine; by autocatalysis mark is found at Tyr690 and Tyr707. The segment covering 711 to 723 (RPSAAGKPSSSSS) has biased composition (low complexity). Positions 711-749 (RPSAAGKPSSSSSSEKRRSLREGSPYVEEDSESEMFDED) are disordered. A compositionally biased stretch (acidic residues) spans 737 to 749 (VEEDSESEMFDED). Asp781 acts as the Proton acceptor in catalysis. Arg785 contacts ATP. Positions 786 and 799 each coordinate Mg(2+). Tyr812 and Tyr925 each carry phosphotyrosine; by autocatalysis. Residues 936–963 (PRGREESSTHSMASQPFNSAGNNSPPSR) form a disordered region. The segment covering 944–960 (THSMASQPFNSAGNNSP) has biased composition (polar residues).

This sequence belongs to the protein kinase superfamily. Tyr protein kinase family. CSF-1/PDGF receptor subfamily. Ubiquitinated. Rapidly ubiquitinated after autophosphorylation induced by kitlg/scf binding, leading to internalization and degradation. In terms of processing, autophosphorylated on tyrosine residues. Phosphorylated tyrosine residues are important for interaction with specific binding partners.

It is found in the cell membrane. The enzyme catalyses L-tyrosyl-[protein] + ATP = O-phospho-L-tyrosyl-[protein] + ADP + H(+). Its function is as follows. Tyrosine-protein kinase that acts as a cell-surface receptor for the cytokine kitlg/scf and plays an essential role in the regulation of cell survival and proliferation, hematopoiesis, stem cell maintenance, gametogenesis, mast cell development, migration and function, and in melanogenesis. In Takifugu rubripes (Japanese pufferfish), this protein is Mast/stem cell growth factor receptor Kit (kit).